The chain runs to 228 residues: Chromatin remodeling protein SHL (228 aa).

The 117-residue stretch at 21 to 137 (KSIQEGDAVL…STTGAFDPDR (117 aa)) folds into the BAH domain. Residues 139-190 (TVFCKCEMPYNPDDLMVQCEECSEWFHPSCIGTTIEEAKKPDNFYCEECSPQ) form a PHD-type zinc finger. The segment covering 191–203 (QQNLHNSNSTSNN) has biased composition (polar residues). Residues 191 to 228 (QQNLHNSNSTSNNRDAKVNGKRSLEVTKSKNKHTKRPG) are disordered. Residues 204–218 (RDAKVNGKRSLEVTK) are compositionally biased toward basic and acidic residues. Residues 210-217 (GKRSLEVT) carry the Nuclear localization signal motif. Over residues 219–228 (SKNKHTKRPG) the composition is skewed to basic residues.

This sequence belongs to the SHL1/EBS protein family. In terms of assembly, recognizes di- and trimethylated histone H3 at lysine 4. Interacts with HDA6. Interacts with DEK3. Expressed ubiquitously. Mostly expressed in roots, stems, leaves and flowers, and, to a lower extent, in siliques.

Its subcellular location is the nucleus. Its function is as follows. Chromatin remodeling factor that binds to methylated histone (e.g. H3K4me2/3) to prevent their acetylation (e.g. H3K9K14Ac), likely by recruiting histone deacetylase (HDAC) complexes, and thus regulate the transcription of target genes. Required during development and for fertility, probably by modulating developmental gene expression. Promotes development speed, but at fitness cost. Involved in the chromatin-mediated repression of floral initiation and controls genes regulating flowering. Negatively regulates the expression of the floral integrator SOC1, by preventing high levels of H3 acetylation, thus maintaining an inactive chromatin conformation. The sequence is that of Chromatin remodeling protein SHL from Arabidopsis thaliana (Mouse-ear cress).